A 1307-amino-acid polypeptide reads, in one-letter code: MTRPRGPAPRDGAAWRRDPARRVLLRDAVRGREGGLRLACAVMAGLIVSGGVACAQDSHMAVAGAPATAVAPPGQPAPMPPATVADAAHLAHAAAVLELLLDQGYYWLGQHNLGKAHETIQRALSIEPDNNEALFLQGRLQMAEGGTTQATRTLERLERQGAPAGLVAQLKAQIQAGPVDPRALAEARALAASGRMMPAMFKYKALFRNGDPPPDLALEYYRVLGATILGYQEARTRLAAWVARNPRDIDARLCLDRILTYRVTSRAEGLDGLRALARSNVSAQIRSDAVAAWRDALLWEPITGQSIPLYDEWLAQHPDDTEFTIRLKKAQETQAGVDAANDRQQGYALLSRHMLDAAAREFHRAVDIDPHDPDALGGLGLVAQARQQPALARQYFLQAMQAGPDAAGHWRAALKALETGGGGVDPLVARIVQAINAGRYDAARADLATLGRRPGYGLTVLSLQAALARRQGDTADAVRLYREVVRRAPRDAGALFSLGALDVQVGDATEAADILTRLQRLAPAMARRLEAMMLSAQADRAGDDDGRIALLRRAQALDPDDPWVRLKLAHALDDAGDHAAAQAMMDALTAPRNASAQALQAGIIYAMGRHDTATAGALLERMPRTGRTPDMDRLASLVVLDQRIAALNHAPVAGNAAVLALADQPDPTGERGMRIAAALLARHAPQDARQALARGESLTQPPTPARMLAYAGTYLRLRSAFDTTRCLDAFDAMAKARPADVTADQARARQQVAIGLAIMTADGFDRYGRTAQAAQVLAPVLRAHPDSVEAHLAMGRVYQTRNMATRALEEDETALRLKPANIYALAAAARDAGGAHHLAQAKGYATRLAHEDPDGPMSWEVRSDIERIEGNSRGQLADVEHARHAQCTLDGEGECGGHESFVSDYRWPLIDSEYMDLHGATLPASYHYIPEDDGAQAMDRQIVYLRDSVSPQFDANTFVRSRTGVAGLGQLTEFAVPITATLPFESWDHRLSFSVTPTLLFTGDPLTNAVSAHQFGTVAVNGARPWGYHHYYTQGVGLSLNYVNRWFAADVGSSPLGFPITNVVGGLEFAPRLTRNLGLRISGGRRMVTDSELSYAGERDPGTGKLWGGVTRLFGHGALEWSARGWNAYAGGGFAYLGGTNVIGNTETEAGAGGSATVWQDHDRQWLRVGLDLMYFGYKRNAYFFTWGQGGYFSPRQYFGAMVPVEWSGHNRRWTWFLRGEAGYQYYHSNAAPYFPTSAQLQGQADGSPPSYYGDSGASGLAGNMRGRLVYQLDHRLRIGLEGGYSRAGSWSETSGMWMAHYTLDGQ.

The first 55 residues, Met1–Ala55, serve as a signal peptide directing secretion. 9 TPR repeats span residues Leu97–Asn130, Leu270–Thr303, Ala339–Asp372, Asp374–Ala406, Leu458–Asp491, Gly493–Met525, Arg528–Asp561, Ile754–Ser787, and Val788–Asn821.

This sequence belongs to the AcsC/BcsC family.

It localises to the cell outer membrane. It functions in the pathway glycan metabolism; bacterial cellulose biosynthesis. Functionally, required for maximal bacterial cellulose synthesis. The sequence is that of Cellulose synthase 2 operon protein C (bcsCII) from Komagataeibacter xylinus (Gluconacetobacter xylinus).